A 224-amino-acid polypeptide reads, in one-letter code: Retinoschisin (224 aa).

The signal sequence occupies residues 1 to 23 (MPHKIEGFFLLLLFGYEATLGLS). One can recognise an F5/8 type C domain in the interval 63–219 (CPYHKPLGFE…IAIRMELLEC (157 aa)). 2 cysteine pairs are disulfide-bonded: Cys-63–Cys-219 and Cys-110–Cys-142.

Homooctamer of 4 homodimers; disulfide-linked. The homooctamer has a flat, cogwheel structure with a diameter of about 14 nm. Two stacked octamers can assemble to form a hexadecamer. In terms of tissue distribution, detected in the eye cup. Detected in retina, in the inner segment of the photoreceptors, the inner nuclear layer, the inner plexiform layer and the ganglion cell layer (at protein level). Restricted to the retina. At the mRNA level, detected only within the photoreceptor cell layer, most prominently within the inner segments of the photoreceptors. Undetectable in the inner plexiform layers and the inner nuclear layer.

Its subcellular location is the secreted. It is found in the cell membrane. Binds negatively charged membrane lipids, such as phosphatidylserine and phosphoinositides. May play a role in cell-cell adhesion processes in the retina, via homomeric interaction between octamers present on the surface of two neighboring cells. Required for normal structure and function of the retina. In Mus musculus (Mouse), this protein is Retinoschisin (Rs1).